Consider the following 156-residue polypeptide: MPRRRVAAKREVLADPKYGSQILAKFMNHVMESGKKAVAERIVYGALDKVKERGKADPLETFEKALDAIAPLVEVKSRRVGGATYQVPVEVRPSRRNALAMRWLVDFARKRGEKSMALRLAGELLDAAEGKGAAVKKREDVHRMAEANKAFSHYRF.

This sequence belongs to the universal ribosomal protein uS7 family. Part of the 30S ribosomal subunit. Contacts proteins S9 and S11.

In terms of biological role, one of the primary rRNA binding proteins, it binds directly to 16S rRNA where it nucleates assembly of the head domain of the 30S subunit. Is located at the subunit interface close to the decoding center, probably blocks exit of the E-site tRNA. In Pseudomonas aeruginosa (strain LESB58), this protein is Small ribosomal subunit protein uS7.